A 419-amino-acid chain; its full sequence is uncharacterized protein (419 aa).

12 helical membrane passes run 15–35, 36–56, 77–99, 104–126, 140–160, 166–186, 213–233, 246–266, 282–302, 309–329, 351–371, and 377–397; these read RVLMINQFGINIGFYMLMPYL, ADYLAGPLGLAAWAVGLVMGV, YKPLIIAGCLIRTGGFALLVVAQ, VLIAAAATGFAGALFNPAVRGYL, MFNVFYQSGILLGPLVGLVLL, ITVLAAAGVFGLLTVAQLVAL, FLTLAAAMTGCYALSFQIYLA, QYLLIAAMFAVSGLVAVGGQL, LVVGATILAASFIPVAVIPNG, VAVMALVLSASLLAVASAALF, FYSTIVGVGVLVGNLAIGSLM, and LNTDEIVWGGLILVGIVAVAG.

Belongs to the major facilitator superfamily.

Its subcellular location is the cell membrane. This is an uncharacterized protein from Mycobacterium tuberculosis (strain CDC 1551 / Oshkosh).